The primary structure comprises 274 residues: Large ribosomal subunit protein uL2 (274 aa).

The segment at 221 to 274 (RGTAMNPVDHPHGGGEGRNFGKHPVTPWGVQTKGKKTRNNKRTDKSIVRRRSKK) is disordered.

Belongs to the universal ribosomal protein uL2 family. As to quaternary structure, part of the 50S ribosomal subunit. Forms a bridge to the 30S subunit in the 70S ribosome.

One of the primary rRNA binding proteins. Required for association of the 30S and 50S subunits to form the 70S ribosome, for tRNA binding and peptide bond formation. It has been suggested to have peptidyltransferase activity; this is somewhat controversial. Makes several contacts with the 16S rRNA in the 70S ribosome. This Hamiltonella defensa subsp. Acyrthosiphon pisum (strain 5AT) protein is Large ribosomal subunit protein uL2.